The primary structure comprises 175 residues: NADH-ubiquinone oxidoreductase chain 6 (175 aa).

5 consecutive transmembrane segments (helical) span residues 1 to 21 (MMTY…VGFS), 25 to 45 (SPIY…GIVM), 47 to 67 (FGGS…MLVV), 88 to 108 (VVMG…LCVL), and 149 to 169 (YGVW…IVVL).

The protein belongs to the complex I subunit 6 family.

Its subcellular location is the mitochondrion membrane. The catalysed reaction is a ubiquinone + NADH + 5 H(+)(in) = a ubiquinol + NAD(+) + 4 H(+)(out). Its function is as follows. Core subunit of the mitochondrial membrane respiratory chain NADH dehydrogenase (Complex I) that is believed to belong to the minimal assembly required for catalysis. Complex I functions in the transfer of electrons from NADH to the respiratory chain. The immediate electron acceptor for the enzyme is believed to be ubiquinone. This is NADH-ubiquinone oxidoreductase chain 6 (MT-ND6) from Rhinolophus monoceros (Formosan lesser horseshoe bat).